Here is a 261-residue protein sequence, read N- to C-terminus: tRNA (guanine-N(7)-)-methyltransferase (261 aa).

4 residues coordinate S-adenosyl-L-methionine: Glu75, Glu100, Asp127, and Asp150. The active site involves Asp150. Residue Lys154 coordinates substrate. The interval 156–161 (RHNKRR) is interaction with RNA. Residues Asp186 and 223–226 (THFE) each bind substrate.

Belongs to the class I-like SAM-binding methyltransferase superfamily. TrmB family.

The catalysed reaction is guanosine(46) in tRNA + S-adenosyl-L-methionine = N(7)-methylguanosine(46) in tRNA + S-adenosyl-L-homocysteine. It functions in the pathway tRNA modification; N(7)-methylguanine-tRNA biosynthesis. Functionally, catalyzes the formation of N(7)-methylguanine at position 46 (m7G46) in tRNA. This is tRNA (guanine-N(7)-)-methyltransferase from Xanthomonas campestris pv. campestris (strain 8004).